A 404-amino-acid polypeptide reads, in one-letter code: Cysteine desulfurase IscS (404 aa).

Pyridoxal 5'-phosphate is bound by residues 75–76, asparagine 155, glutamine 183, and 203–205; these read AT and SAH. An N6-(pyridoxal phosphate)lysine modification is found at lysine 206. Position 243 (threonine 243) interacts with pyridoxal 5'-phosphate. Catalysis depends on cysteine 328, which acts as the Cysteine persulfide intermediate. Cysteine 328 provides a ligand contact to [2Fe-2S] cluster.

Belongs to the class-V pyridoxal-phosphate-dependent aminotransferase family. NifS/IscS subfamily. As to quaternary structure, homodimer. Forms a heterotetramer with IscU, interacts with other sulfur acceptors. The cofactor is pyridoxal 5'-phosphate.

The protein resides in the cytoplasm. The catalysed reaction is (sulfur carrier)-H + L-cysteine = (sulfur carrier)-SH + L-alanine. The protein operates within cofactor biosynthesis; iron-sulfur cluster biosynthesis. Master enzyme that delivers sulfur to a number of partners involved in Fe-S cluster assembly, tRNA modification or cofactor biosynthesis. Catalyzes the removal of elemental sulfur atoms from cysteine to produce alanine. Functions as a sulfur delivery protein for Fe-S cluster synthesis onto IscU, an Fe-S scaffold assembly protein, as well as other S acceptor proteins. The polypeptide is Cysteine desulfurase IscS (Photorhabdus laumondii subsp. laumondii (strain DSM 15139 / CIP 105565 / TT01) (Photorhabdus luminescens subsp. laumondii)).